A 617-amino-acid polypeptide reads, in one-letter code: Leucine aminopeptidase 2 (617 aa).

A peptide is bound by residues 139–141 (QCQ) and 271–276 (PYGGME). His300 contacts Zn(2+). Glu301 serves as the catalytic Proton acceptor. His304 and Glu323 together coordinate Zn(2+). Residue Tyr388 is the Proton donor of the active site.

Belongs to the peptidase M1 family. Zn(2+) serves as cofactor.

The protein resides in the cytoplasm. The protein localises to the nucleus. It catalyses the reaction an epoxide + H2O = an ethanediol. In terms of biological role, aminopeptidase that preferentially cleaves di- and tripeptides. Also has low epoxide hydrolase activity (in vitro). Can hydrolyze the epoxide leukotriene LTA(4) but it forms preferentially 5,6-dihydroxy-7,9,11,14-eicosatetraenoic acid rather than the cytokine leukotriene B(4) as the product compared to the homologous mammalian enzyme (in vitro). The polypeptide is Leucine aminopeptidase 2 (Aspergillus terreus (strain NIH 2624 / FGSC A1156)).